Here is a 353-residue protein sequence, read N- to C-terminus: UPF0421 protein YgaE (353 aa).

4 consecutive transmembrane segments (helical) span residues 20–40 (LASW…IFAI), 67–87 (VFGL…VIVI), 103–123 (LVTV…FALI), and 125–145 (TSTV…FLPP).

It belongs to the UPF0421 family.

Its subcellular location is the cell membrane. The protein is UPF0421 protein YgaE (ygaE) of Bacillus subtilis (strain 168).